Consider the following 926-residue polypeptide: Translation initiation factor IF-2 (926 aa).

Disordered stretches follow at residues 1–185 and 200–299; these read MTDS…EEVE and EDKA…RRRG. Composition is skewed to low complexity over residues 13–24 and 70–96; these read TGKKTLTLKPTG and APAT…AAPQ. A compositionally biased stretch (polar residues) spans 110-133; it reads TNQYSQQRHPGQQNRPQASSQPSR. The span at 151–185 shows a compositional bias: basic and acidic residues; that stretch reads MDARRRALAEAQVREVEDAKRRAEEEVRRQAEEVE. A compositionally biased stretch (low complexity) spans 211 to 251; that stretch reads APEPVAEPVAPVAETPRAADPAPRAPSPAGAKPAAGAPAPS. The tr-type G domain occupies 424-591; sequence SRPPVVTIMG…AVLLQAEILD (168 aa). The G1 stretch occupies residues 433 to 440; the sequence is GHVDHGKT. Residue 433–440 participates in GTP binding; the sequence is GHVDHGKT. Residues 458 to 462 are G2; sequence GITQH. The tract at residues 479 to 482 is G3; sequence DTPG. Residues 479 to 483 and 533 to 536 contribute to the GTP site; these read DTPGH and NKID. The interval 533 to 536 is G4; the sequence is NKID. A G5 region spans residues 569-571; it reads SAK.

It belongs to the TRAFAC class translation factor GTPase superfamily. Classic translation factor GTPase family. IF-2 subfamily.

Its subcellular location is the cytoplasm. Functionally, one of the essential components for the initiation of protein synthesis. Protects formylmethionyl-tRNA from spontaneous hydrolysis and promotes its binding to the 30S ribosomal subunits. Also involved in the hydrolysis of GTP during the formation of the 70S ribosomal complex. The sequence is that of Translation initiation factor IF-2 from Allorhizobium ampelinum (strain ATCC BAA-846 / DSM 112012 / S4) (Agrobacterium vitis (strain S4)).